A 245-amino-acid polypeptide reads, in one-letter code: Probable phosphatase PMI1003 (245 aa).

9 residues coordinate Zn(2+): H7, H9, H15, H40, E73, H101, H131, D192, and H194.

The protein belongs to the PHP family. As to quaternary structure, homotrimer. It depends on Zn(2+) as a cofactor.

The protein is Probable phosphatase PMI1003 of Proteus mirabilis (strain HI4320).